A 290-amino-acid polypeptide reads, in one-letter code: Probable septum site-determining protein MinC (290 aa).

It belongs to the MinC family. As to quaternary structure, interacts with MinD and FtsZ.

Functionally, cell division inhibitor that blocks the formation of polar Z ring septums. Rapidly oscillates between the poles of the cell to destabilize FtsZ filaments that have formed before they mature into polar Z rings. Prevents FtsZ polymerization. The protein is Probable septum site-determining protein MinC of Heliobacterium modesticaldum (strain ATCC 51547 / Ice1).